The chain runs to 370 residues: D-aspartate oxidase (370 aa).

Positions 15, 49, 50, 54, 166, 317, 346, and 348 each coordinate FAD. The Microbody targeting signal signature appears at 368–370; sequence ARL.

It belongs to the DAMOX/DASOX family. Homotetramer. FAD serves as cofactor.

The protein localises to the peroxisome matrix. It carries out the reaction D-aspartate + O2 + H2O = oxaloacetate + H2O2 + NH4(+). The catalysed reaction is D-glutamate + O2 + H2O = H2O2 + 2-oxoglutarate + NH4(+). With respect to regulation, inhibited by malonate and D-malate. Very mildly inhibited by benzoate, ethylenediaminetetraacetic acid (EDTA), crotonate and anthranilate. May be very mildly inhibited by meso-tartrate. Functionally, selectively catalyzes the oxidative deamination of acidic amino acids. Protects the organism from the toxicity of D-amino acids. Enables the organism to utilize D-amino acids as a source of nutrients. Enables the organism to utilize D-aspartate as a source of nitrogen and carbon. In Vanrija humicola (Yeast), this protein is D-aspartate oxidase.